Reading from the N-terminus, the 281-residue chain is AB hydrolase superfamily protein YclE (281 aa).

The region spanning 30–268 (SAVYYPRLFS…SGHQPMLEEP (239 aa)) is the AB hydrolase-1 domain. Serine 95 functions as the Nucleophile in the catalytic mechanism. The active site involves aspartate 232. The active-site Proton donor is histidine 261.

Belongs to the AB hydrolase superfamily.

The sequence is that of AB hydrolase superfamily protein YclE (yclE) from Bacillus subtilis (strain 168).